Reading from the N-terminus, the 257-residue chain is Phosphate import ATP-binding protein PstB (257 aa).

Residues 11 to 252 (FNISRLYLYI…PKNELTEKYV (242 aa)) form the ABC transporter domain. Residue 43–50 (GPSGSGKS) coordinates ATP.

It belongs to the ABC transporter superfamily. Phosphate importer (TC 3.A.1.7) family. The complex is composed of two ATP-binding proteins (PstB), two transmembrane proteins (PstC and PstA) and a solute-binding protein (PstS).

Its subcellular location is the cell membrane. The catalysed reaction is phosphate(out) + ATP + H2O = ADP + 2 phosphate(in) + H(+). Part of the ABC transporter complex PstSACB involved in phosphate import. Responsible for energy coupling to the transport system. This is Phosphate import ATP-binding protein PstB from Saccharolobus solfataricus (strain ATCC 35092 / DSM 1617 / JCM 11322 / P2) (Sulfolobus solfataricus).